A 68-amino-acid chain; its full sequence is MAVKFHLCLLLIILVGMGAHVAFADQQFCDHPYGTCYYVEDECPEDMPVDCSENFYCTEPTNKCCCYE.

Residues 1–24 (MAVKFHLCLLLIILVGMGAHVAFA) form the signal peptide.

The protein belongs to the Cnidaria small cysteine-rich protein (SCRiP) family. gamma subfamily. In terms of processing, contains 4 disulfide bonds.

The protein resides in the secreted. Its subcellular location is the nematocyst. In terms of biological role, induces neurotoxic symptoms on zebrafish. Has also been claimed to be implied in calcification, but tests on homolog proteins suggest that proteins of this family have a neurotoxic function and not a calcification function. The sequence is that of Small cysteine-rich protein 2 from Orbicella faveolata (Mountainous star coral).